The sequence spans 250 residues: Testis-expressed protein 101 (250 aa).

The N-terminal stretch at 1 to 25 is a signal peptide; the sequence is MGACRIQYVLLIFLLIASRWTLVQN. 4 N-linked (GlcNAc...) asparagine glycosylation sites follow: N45, N110, N134, and N160. Residues 141–215 form the UPAR/Ly6 domain; the sequence is CPTCVALGSC…VKETCSYQSF (75 aa). G224 carries the GPI-anchor amidated glycine lipid modification. Residues 225–250 constitute a propeptide, removed in mature form; that stretch reads ASQMPTSLWVLELLFPLLLLPLTHFP.

Interacts with VAMP3. Interacts with LY6K. Interacts with DPEP3; co-localized on the cell surface of spermatocytes, spermatids, and testicular spermatozoa, co-localized only in cytoplasmic droplets of caput and corpus epididymal sperm. Interacts with ADAM3; co-localized on sperm surface. Interacts with ADAM5. N-glycosylated; by high mannose and/or biantennary complex and/or certain types of hybrid oligosaccharides; possesses different oligosaccharides chains according to its subcellular localization in the testis. Post-translationally, sheds from membrane raft by ACE and released from the cell surface of epididymal sperm while it passes through the caput epididymis leading to disappearance of TEX101 on spermatozoa; is essential to produce fertile spermatozoa. In terms of tissue distribution, detected in testis and ovary. Expressed in spermatocytes, spermatids and testicular spermatozoa, but not in spermatogonia or interstitial cells. Expressed abundantly in testicular germ cells (TGCs) but mostly disappeared from epididymal spermatozoa.

Its subcellular location is the cell membrane. The protein localises to the membrane raft. The protein resides in the cytoplasmic vesicle. It localises to the secretory vesicle. It is found in the acrosome. Its subcellular location is the secreted. Plays a role in fertilization by controlling binding of sperm to zona pellucida and migration of spermatozoa into the oviduct probably through molecule adhesion ADAM3. May play a role in signal transduction and promote protein tyrosine phosphorylation. This Mus musculus (Mouse) protein is Testis-expressed protein 101.